A 639-amino-acid chain; its full sequence is Splicing factor 1 (639 aa).

Disordered regions lie at residues 1-42 (MATG…VIPP) and 65-94 (LRTG…GKRL). At Ala-2 the chain carries N-acetylalanine. The residue at position 14 (Ser-14) is a Phosphoserine. The Nuclear localization signal motif lies at 15–19 (KKRKR). Ser-20 carries the phosphoserine; by PKG modification. Residues Ser-80 and Ser-82 each carry the phosphoserine modification. Tyr-87 is subject to Phosphotyrosine. Ser-89 is modified (phosphoserine). Positions 141–222 (MIPQDEYPEI…ENVKKAVEQI (82 aa)) constitute a KH domain. The CCHC-type zinc finger occupies 277 to 296 (TVCTKCGGAGHIASDCKFQR). The disordered stretch occupies residues 325 to 639 (VPASVGSTSG…PAPPPPPPQN (315 aa)). Residues 335 to 350 (PATTPLASAPRPAAPA) are compositionally biased toward low complexity. Gly residues predominate over residues 382 to 394 (MHGGGPGGPGGGP). Pro residues predominate over residues 418 to 447 (NGPPPPWMQPPPPPMNQGPHPPGHHGPPPM). Leu-463 is subject to Phosphoserine. An Omega-N-methylarginine modification is found at Lys-467. Pro residues predominate over residues 470–499 (MPPPPMGMMPPPPPPPSGQPPPPPSGPLPP). Composition is skewed to low complexity over residues 515 to 534 (SSMA…TTTT) and 542 to 566 (PPWQ…NPTM). Pro residues-rich tracts occupy residues 567–591 (VPLP…PPPG) and 598–608 (APPPPPPPPMD). Positions 615–625 (MMGMGVAGMPP) are enriched in low complexity. A compositionally biased stretch (pro residues) spans 626-639 (FGMPPAPPPPPPQN).

The protein belongs to the BBP/SF1 family. In terms of assembly, binds U2AF2. Interacts with U1 snRNA. Binds EWSR1, FUS and TAF15. Interacts with RBM17. Post-translationally, phosphorylation on Ser-20 interferes with U2AF2 binding and spliceosome assembly. Isoform 6 is phosphorylated on Ser-463. As to expression, detected in lung, ovary, adrenal gland, colon, kidney, muscle, pancreas, thyroid, placenta, brain, liver and heart.

It localises to the nucleus. Functionally, necessary for the ATP-dependent first step of spliceosome assembly. Binds to the intron branch point sequence (BPS) 5'-UACUAAC-3' of the pre-mRNA. May act as transcription repressor. This chain is Splicing factor 1 (SF1), found in Homo sapiens (Human).